The sequence spans 492 residues: GTPase Der (492 aa).

2 consecutive EngA-type G domains span residues 3–167 (PVVA…PAPE) and 188–363 (ICIA…AQYA). GTP contacts are provided by residues 9–16 (GRPNVGKS), 56–60 (DTGGF), 119–122 (NKVE), 194–201 (GRPNVGKS), 241–245 (DTAGI), and 306–309 (NKWD). In terms of domain architecture, KH-like spans 364–448 (YRINTGLLNR…PIRLLFRAKT (85 aa)). The tract at residues 464 to 492 (VEKKEKKTTRRKKERKEQSRRKRVRDLKG) is disordered. The span at 469–492 (KKTTRRKKERKEQSRRKRVRDLKG) shows a compositional bias: basic residues.

It belongs to the TRAFAC class TrmE-Era-EngA-EngB-Septin-like GTPase superfamily. EngA (Der) GTPase family. As to quaternary structure, associates with the 50S ribosomal subunit.

Its function is as follows. GTPase that plays an essential role in the late steps of ribosome biogenesis. This Desulforapulum autotrophicum (strain ATCC 43914 / DSM 3382 / VKM B-1955 / HRM2) (Desulfobacterium autotrophicum) protein is GTPase Der.